A 2631-amino-acid polypeptide reads, in one-letter code: Cyclic GMP-binding protein C (2631 aa).

LRR repeat units follow at residues 170–194 (TAQI…IFSL), 196–217 (WIQK…IGKL), 218–240 (QQLQ…IGDL), 242–262 (NLKR…LERL), 263–285 (SKLE…IASL), and 287–308 (SLKT…VVSK). Residues 323–515 (GARPCLRSKL…QLIEDIIKTQ (193 aa)) enclose the Roc domain. GTP is bound by residues 336-343 (GDPGVGKT), 402-406 (DIANQ), and 458-461 (THID). The COR domain occupies 523-741 (PSSFFTLEEA…ESCQKRAVIL (219 aa)). In terms of domain architecture, Protein kinase spans 878–1172 (VKINKEVGRG…KKKFAPLPFT (295 aa)). ATP-binding positions include 884–892 (VGRGAFGIV) and K905. Residue D1023 is the Proton acceptor of the active site. Positions 1225–1250 (ISLTSSGTSPTNSPVGGLLSQSLTQP) are enriched in polar residues. 2 disordered regions span residues 1225–1263 (ISLT…ILST) and 1387–1418 (SSAT…RNSV). The segment covering 1251-1263 (ITSGGSTSGILST) has biased composition (low complexity). The N-terminal Ras-GEF domain maps to 1366 to 1539 (SVSIIIAATM…QIYGTLTTHE (174 aa)). Basic and acidic residues predominate over residues 1392-1404 (KSEHISTRRRSDT). The region spanning 1620–1706 (PLLGITVKEK…SPTSFYMFLE (87 aa)) is the DEP domain. The region spanning 1708–1971 (DPELIARQYT…DLKALDSLQI (264 aa)) is the Ras-GEF domain. The segment at 1989–2013 (GTTNDDKEKGDENGGGLTSSNFFGN) is disordered. An a nucleoside 3',5'-cyclic phosphate-binding site is contributed by 2014-2133 (GSDELTERDW…AKFYKIMANQ (120 aa)). Disordered stretches follow at residues 2142-2180 (PWSK…GGGL), 2192-2239 (MSLS…TTTD), and 2263-2346 (SANL…GQQP). A compositionally biased stretch (low complexity) spans 2144–2174 (SKPKNTTGGSSSSNQSAGPDNILGTTPTGIS). Residues 2212 to 2221 (LPSPPAPLQS) are compositionally biased toward pro residues. A compositionally biased stretch (low complexity) spans 2222–2238 (PPTSGISSPTTTTSTTT). Over residues 2287-2299 (TINKDPHQRDSGS) the composition is skewed to basic and acidic residues. Positions 2321–2336 (GSISYLGRTQTSTSPL) are enriched in polar residues. One can recognise a GRAM domain in the interval 2354–2414 (EFCQRFALVD…KNIDKLICIN (61 aa)). 2490–2616 (GDELTKEDWE…ASKWFKYLAT (127 aa)) contacts a nucleoside 3',5'-cyclic phosphate.

The protein belongs to the protein kinase superfamily. TKL Ser/Thr protein kinase family. ROCO subfamily.

The enzyme catalyses L-seryl-[protein] + ATP = O-phospho-L-seryl-[protein] + ADP + H(+). It catalyses the reaction L-threonyl-[protein] + ATP = O-phospho-L-threonyl-[protein] + ADP + H(+). Its function is as follows. Promotes the exchange of Ras-bound GDP by GTP. Required for cyclic GMP-mediated chemotaxis, polarity. Plays a key role in cyclic AMP-induced myosin II translocation to the cortex. Also involved in the phosphorylation of mlkA and mlcR, either directly or via an intermediate kinase. In Dictyostelium discoideum (Social amoeba), this protein is Cyclic GMP-binding protein C (gbpC).